A 148-amino-acid polypeptide reads, in one-letter code: uncharacterized protein (148 aa).

The signal sequence occupies residues 1–20; the sequence is MNLTKLLPAFAAAVVLSACA.

This is an uncharacterized protein from Haemophilus influenzae (strain ATCC 51907 / DSM 11121 / KW20 / Rd).